A 152-amino-acid chain; its full sequence is Deoxyuridine 5'-triphosphate nucleotidohydrolase (152 aa).

Residues 71-73 (RSG), Asn-84, 88-90 (LID), and Met-98 each bind substrate.

This sequence belongs to the dUTPase family. Mg(2+) is required as a cofactor.

The enzyme catalyses dUTP + H2O = dUMP + diphosphate + H(+). It participates in pyrimidine metabolism; dUMP biosynthesis; dUMP from dCTP (dUTP route): step 2/2. In terms of biological role, this enzyme is involved in nucleotide metabolism: it produces dUMP, the immediate precursor of thymidine nucleotides and it decreases the intracellular concentration of dUTP so that uracil cannot be incorporated into DNA. This Serratia proteamaculans (strain 568) protein is Deoxyuridine 5'-triphosphate nucleotidohydrolase.